The sequence spans 208 residues: Large ribosomal subunit protein bL25 (208 aa).

The disordered stretch occupies residues 163-208; that stretch reads DYSYNHEPDEVVASILPPQKQEETEAESAAQDVEEPEKGTEEEKEE. Basic and acidic residues predominate over residues 198 to 208; that stretch reads PEKGTEEEKEE.

This sequence belongs to the bacterial ribosomal protein bL25 family. CTC subfamily. Part of the 50S ribosomal subunit; part of the 5S rRNA/L5/L18/L25 subcomplex. Contacts the 5S rRNA. Binds to the 5S rRNA independently of L5 and L18.

This is one of the proteins that binds to the 5S RNA in the ribosome where it forms part of the central protuberance. This chain is Large ribosomal subunit protein bL25, found in Bacillus licheniformis (strain ATCC 14580 / DSM 13 / JCM 2505 / CCUG 7422 / NBRC 12200 / NCIMB 9375 / NCTC 10341 / NRRL NRS-1264 / Gibson 46).